Reading from the N-terminus, the 141-residue chain is Endoribonuclease YbeY (141 aa).

Positions 100, 104, and 110 each coordinate Zn(2+).

It belongs to the endoribonuclease YbeY family. Requires Zn(2+) as cofactor.

The protein resides in the cytoplasm. Functionally, single strand-specific metallo-endoribonuclease involved in late-stage 70S ribosome quality control and in maturation of the 3' terminus of the 16S rRNA. The protein is Endoribonuclease YbeY of Helicobacter pylori (strain J99 / ATCC 700824) (Campylobacter pylori J99).